The primary structure comprises 574 residues: MRYALERFISDIQAAIVATGKVPADLIEITTPKPNIPADRTFVTFKAAKALGVDPVRLAADLATAIVPPPDSLIGEVTATGAFLNFTLHPQRLAAAVMAEIETYGDAYGSVADGANRTVVIDYSSPNIAKRMHVGHIRSTIIGQALVHIFRALGYRVIGDNHLGDWGTQFGIILAAMQRYGRPQNEGEAAMAELEALYARYNAEMKDNPPLEDEARRWSLALEQGDPTARELWQWCVDLTMRAAQRNYDRLGVRFDYAYGESFYEAMLPGVIEEALQSGAAFRDVDGAVVAELDKLPRFIVQRSDGGTVYITRDIATIKFRLQEFNPSHIIYVVDARQELHFRQLFAIVRAMGYALDVELIHVPFGVITTPDGQPLSTKKGNMVYLESLLDDAVARARALVDAKSPTLSPEERAQIAEAVGIGAVIYNDLYQDPRRNITLDWDRMLSIEGNSAAYLQYSHARCRSILRRAAEEGMLSTEVDPGLLTHPSEQRLVRHLARLPEAVREAGARYAPFVIADWCYTTAREFGIFFEQCPVLRAETPALRAARLQLVSATANALRNGLALLGIQAPERM.

Residues 126–136 (PNIAKRMHVGH) carry the 'HIGH' region motif.

The protein belongs to the class-I aminoacyl-tRNA synthetase family. As to quaternary structure, monomer.

The protein resides in the cytoplasm. The enzyme catalyses tRNA(Arg) + L-arginine + ATP = L-arginyl-tRNA(Arg) + AMP + diphosphate. This Chloroflexus aurantiacus (strain ATCC 29366 / DSM 635 / J-10-fl) protein is Arginine--tRNA ligase.